A 221-amino-acid chain; its full sequence is MESVTLGVRKGAWTEEEDKLLKKCIEKYGEGKWHQVPLRSGLNRCRKSCRMRWLNYLRPNINRGNFTADEVDLIIRLHKLLGNRWSLIAGRLPGRTSNDVKNYWNTHLQKKLITYPRAQPIPKTQKTIVPKGTEAQPRAHPKSPPRPSPPSNNEILWWDNKTVSPQIDNIGIHWSIDGSIFEEPILGNLQSAGDSFLQQNQSDWSDIFLEDVNLWDLLGDD.

2 consecutive HTH myb-type domains span residues 1–57 and 58–112; these read MESV…LNYL and RPNI…QKKL. DNA-binding regions (H-T-H motif) lie at residues 33–57 and 85–108; these read WHQV…LNYL and WSLI…NTHL. The tract at residues 126–154 is disordered; the sequence is KTIVPKGTEAQPRAHPKSPPRPSPPSNNE.

Expressed in stems and leaves. Expressed at low levels in ovaries.

It localises to the nucleus. In terms of biological role, transcription activator involved in the regulation of anthocyanin biosynthesis in red-fleshed kiwifruit varieties. Activates the transcription of genes involved in anthocyanin biosynthesis, such as dihydroflavonol reductase (DFR), anthocyanidin synthase (ANS) and UDP flavonoid glycosyltransferase (UFGT). In Actinidia chinensis var. chinensis (Chinese soft-hair kiwi), this protein is Transcription factor MYB1.